We begin with the raw amino-acid sequence, 102 residues long: Large ribosomal subunit protein bL21 (102 aa).

This sequence belongs to the bacterial ribosomal protein bL21 family. As to quaternary structure, part of the 50S ribosomal subunit. Contacts protein L20.

Functionally, this protein binds to 23S rRNA in the presence of protein L20. This is Large ribosomal subunit protein bL21 from Sorangium cellulosum (strain So ce56) (Polyangium cellulosum (strain So ce56)).